The sequence spans 428 residues: UDP-N-acetylglucosamine 1-carboxyvinyltransferase (428 aa).

25 to 26 (KN) contacts phosphoenolpyruvate. Arginine 102 serves as a coordination point for UDP-N-acetyl-alpha-D-glucosamine. Cysteine 126 serves as the catalytic Proton donor. Cysteine 126 carries the 2-(S-cysteinyl)pyruvic acid O-phosphothioketal modification. Aspartate 316 and valine 338 together coordinate UDP-N-acetyl-alpha-D-glucosamine.

The protein belongs to the EPSP synthase family. MurA subfamily.

The protein resides in the cytoplasm. The catalysed reaction is phosphoenolpyruvate + UDP-N-acetyl-alpha-D-glucosamine = UDP-N-acetyl-3-O-(1-carboxyvinyl)-alpha-D-glucosamine + phosphate. The protein operates within cell wall biogenesis; peptidoglycan biosynthesis. Its function is as follows. Cell wall formation. Adds enolpyruvyl to UDP-N-acetylglucosamine. In Anaplasma marginale (strain St. Maries), this protein is UDP-N-acetylglucosamine 1-carboxyvinyltransferase.